The following is a 232-amino-acid chain: PsbP domain-containing protein 2, chloroplastic (232 aa).

Residues 1–34 (MWSQSFLGSAPKLCLFSSSLPPFSHHKIHKFFCF) constitute a chloroplast transit peptide. The N-terminal 37 residues, 35 to 71 (AQNPSSTVSINLSKRHLNLSILTLFFNGFLLDNKAKS), are a transit peptide targeting the thylakoid.

Belongs to the PsbP family.

It localises to the plastid. It is found in the chloroplast thylakoid lumen. The sequence is that of PsbP domain-containing protein 2, chloroplastic (PPD2) from Arabidopsis thaliana (Mouse-ear cress).